Reading from the N-terminus, the 365-residue chain is Chorismate synthase (365 aa).

Residue arginine 46 participates in NADP(+) binding. Residues arginine 123–serine 125, asparagine 241–glycine 242, glycine 281, lysine 296–serine 300, and arginine 322 each bind FMN.

Belongs to the chorismate synthase family. In terms of assembly, homotetramer. The cofactor is FMNH2.

It carries out the reaction 5-O-(1-carboxyvinyl)-3-phosphoshikimate = chorismate + phosphate. It participates in metabolic intermediate biosynthesis; chorismate biosynthesis; chorismate from D-erythrose 4-phosphate and phosphoenolpyruvate: step 7/7. Catalyzes the anti-1,4-elimination of the C-3 phosphate and the C-6 proR hydrogen from 5-enolpyruvylshikimate-3-phosphate (EPSP) to yield chorismate, which is the branch point compound that serves as the starting substrate for the three terminal pathways of aromatic amino acid biosynthesis. This reaction introduces a second double bond into the aromatic ring system. In Helicobacter pylori (strain ATCC 700392 / 26695) (Campylobacter pylori), this protein is Chorismate synthase.